The sequence spans 215 residues: N-(5'-phosphoribosyl)anthranilate isomerase (215 aa).

It belongs to the TrpF family.

It catalyses the reaction N-(5-phospho-beta-D-ribosyl)anthranilate = 1-(2-carboxyphenylamino)-1-deoxy-D-ribulose 5-phosphate. It functions in the pathway amino-acid biosynthesis; L-tryptophan biosynthesis; L-tryptophan from chorismate: step 3/5. The chain is N-(5'-phosphoribosyl)anthranilate isomerase from Pelodictyon phaeoclathratiforme (strain DSM 5477 / BU-1).